The sequence spans 231 residues: uncharacterized protein (231 aa).

10 to 34 provides a ligand contact to NADP(+); the sequence is VVTGAGSGIGEAIATLLHEEGAKVV. Residue Ser-140 coordinates substrate. Tyr-153 functions as the Proton acceptor in the catalytic mechanism.

It belongs to the short-chain dehydrogenases/reductases (SDR) family.

This is an uncharacterized protein from Staphylococcus aureus (strain COL).